A 119-amino-acid polypeptide reads, in one-letter code: Phosphoribosyl-AMP cyclohydrolase (119 aa).

Asp72 provides a ligand contact to Mg(2+). A Zn(2+)-binding site is contributed by Cys73. Positions 74 and 76 each coordinate Mg(2+). The Zn(2+) site is built by Cys89 and Cys96.

Belongs to the PRA-CH family. In terms of assembly, homodimer. Requires Mg(2+) as cofactor. Zn(2+) serves as cofactor.

The protein localises to the cytoplasm. It catalyses the reaction 1-(5-phospho-beta-D-ribosyl)-5'-AMP + H2O = 1-(5-phospho-beta-D-ribosyl)-5-[(5-phospho-beta-D-ribosylamino)methylideneamino]imidazole-4-carboxamide. The protein operates within amino-acid biosynthesis; L-histidine biosynthesis; L-histidine from 5-phospho-alpha-D-ribose 1-diphosphate: step 3/9. Its function is as follows. Catalyzes the hydrolysis of the adenine ring of phosphoribosyl-AMP. This Methanocella arvoryzae (strain DSM 22066 / NBRC 105507 / MRE50) protein is Phosphoribosyl-AMP cyclohydrolase.